Reading from the N-terminus, the 87-residue chain is Putative regulatory protein ABC2323 (87 aa).

This sequence belongs to the RemA family.

The polypeptide is Putative regulatory protein ABC2323 (Shouchella clausii (strain KSM-K16) (Alkalihalobacillus clausii)).